Reading from the N-terminus, the 290-residue chain is Prepilin leader peptidase/N-methyltransferase (290 aa).

The chain crosses the membrane as a helical span at residues 14–34 (LYFSLVFLFSLMIGSFLNVVI). Zn(2+) contacts are provided by cysteine 74, cysteine 77, cysteine 99, and cysteine 102. The next 6 membrane-spanning stretches (helical) occupy residues 106–126 (ISARYPLVELLTALLSVAVAM), 130–150 (PGWGTLAALLLTWVLVALTFI), 161–181 (LTLPLLWGGLLFNLLGGFVSL), 185–205 (VIGAMAGYLVLWSLYWAFKLL), 232–252 (PIVLLLSSLVGAFMGIGLILL), and 261–281 (IPFGPYLAIAGWIALLWGDSI).

Belongs to the peptidase A24 family. Zn(2+) is required as a cofactor.

The protein localises to the cell inner membrane. It catalyses the reaction Typically cleaves a -Gly-|-Phe- bond to release an N-terminal, basic peptide of 5-8 residues from type IV prepilin, and then N-methylates the new N-terminal amino group, the methyl donor being S-adenosyl-L-methionine.. Functionally, plays an essential role in type IV pili and type II pseudopili formation by proteolytically removing the leader sequence from substrate proteins and subsequently monomethylating the alpha-amino group of the newly exposed N-terminal phenylalanine. This is Prepilin leader peptidase/N-methyltransferase (tapD) from Aeromonas hydrophila.